Reading from the N-terminus, the 172-residue chain is Small ribosomal subunit protein uS5 (172 aa).

The 64-residue stretch at L17–V80 folds into the S5 DRBM domain.

This sequence belongs to the universal ribosomal protein uS5 family. Part of the 30S ribosomal subunit. Contacts proteins S4 and S8.

Its function is as follows. With S4 and S12 plays an important role in translational accuracy. In terms of biological role, located at the back of the 30S subunit body where it stabilizes the conformation of the head with respect to the body. The protein is Small ribosomal subunit protein uS5 of Polaromonas naphthalenivorans (strain CJ2).